We begin with the raw amino-acid sequence, 88 residues long: Small ribosomal subunit protein uS15 (88 aa).

A compositionally biased stretch (polar residues) spans 1-20; sequence MLTTQDKQNIIKENQQSEGD. Residues 1-24 form a disordered region; the sequence is MLTTQDKQNIIKENQQSEGDTGSP.

It belongs to the universal ribosomal protein uS15 family. As to quaternary structure, part of the 30S ribosomal subunit. Forms a bridge to the 50S subunit in the 70S ribosome, contacting the 23S rRNA.

Functionally, one of the primary rRNA binding proteins, it binds directly to 16S rRNA where it helps nucleate assembly of the platform of the 30S subunit by binding and bridging several RNA helices of the 16S rRNA. Forms an intersubunit bridge (bridge B4) with the 23S rRNA of the 50S subunit in the ribosome. This is Small ribosomal subunit protein uS15 from Francisella philomiragia subsp. philomiragia (strain ATCC 25017 / CCUG 19701 / FSC 153 / O#319-036).